Consider the following 811-residue polypeptide: Methionine--tRNA ligase (811 aa).

Residues 11–21 carry the 'HIGH' region motif; it reads PYVNNVPHLGN. Zn(2+)-binding residues include C142, C145, C155, and C158. Residues 344 to 348 carry the 'KMSKS' region motif; it reads KFSKS. Residue K347 participates in ATP binding. A disordered region spans residues 606–640; sequence GVSVPRTAQMPTGMNKKETDAQQKKEEREMPPPSD. A compositionally biased stretch (basic and acidic residues) spans 620–635; that stretch reads NKKETDAQQKKEEREM. The 106-residue stretch at 648-753 folds into the tRNA-binding domain; it reads FSERVVLKVA…PWALPGERAT (106 aa).

Belongs to the class-I aminoacyl-tRNA synthetase family. MetG type 1 subfamily. As to quaternary structure, homodimer. The cofactor is Zn(2+).

The protein resides in the cytoplasm. The catalysed reaction is tRNA(Met) + L-methionine + ATP = L-methionyl-tRNA(Met) + AMP + diphosphate. Is required not only for elongation of protein synthesis but also for the initiation of all mRNA translation through initiator tRNA(fMet) aminoacylation. The sequence is that of Methionine--tRNA ligase from Treponema pallidum (strain Nichols).